Consider the following 261-residue polypeptide: TM2 domain-containing protein 3 (261 aa).

Residues 1-44 (MEAAAEPLRSVRHLSRVLLFLSQCYILSGDGSLNLEHSQPLAQA) form the signal peptide. The Extracellular portion of the chain corresponds to 45–193 (IKDPGPTRTF…RTFPKLLYCN (149 aa)). Residues Asn-101, Asn-136, Asn-154, Asn-171, Asn-183, and Asn-193 are each glycosylated (N-linked (GlcNAc...) asparagine). A helical transmembrane segment spans residues 194 to 214 (WTGGYKWSTALALSITLGGFG). The TM2 domain occupies 197 to 244 (GYKWSTALALSITLGGFGADRFYLGQWREGLGKLFSFGGLGIWTLIDV). At 215–229 (ADRFYLGQWREGLGK) the chain is on the cytoplasmic side. Residues 230-250 (LFSFGGLGIWTLIDVLLIGVG) traverse the membrane as a helical segment. Residues 251 to 261 (YVGPADGSLYI) lie on the Extracellular side of the membrane.

It belongs to the TM2 family.

Its subcellular location is the membrane. This chain is TM2 domain-containing protein 3 (Tm2d3), found in Mus musculus (Mouse).